A 207-amino-acid polypeptide reads, in one-letter code: Guanylate kinase (207 aa).

In terms of domain architecture, Guanylate kinase-like spans 4–184 (GTLYIVSAPS…ALTDLKTIIR (181 aa)). 11 to 18 (APSGAGKS) provides a ligand contact to ATP.

Belongs to the guanylate kinase family.

It is found in the cytoplasm. The enzyme catalyses GMP + ATP = GDP + ADP. Essential for recycling GMP and indirectly, cGMP. The chain is Guanylate kinase from Escherichia coli O157:H7.